Consider the following 333-residue polypeptide: Acetyltransferase Pat (333 aa).

Residues 88-91 (GEIA), 98-99 (RS), and arginine 138 contribute to the 3',5'-cyclic AMP site. The 163-residue stretch at 156–318 (LMLRPVLPGD…GELSLGREMV (163 aa)) folds into the N-acetyltransferase domain. Position 173 (histidine 173) interacts with substrate. Aspartate 214 serves as a coordination point for Mg(2+). Residues 238 to 240 (FTV), 246 to 251 (GRGIGS), asparagine 277, and arginine 286 contribute to the substrate site.

As to quaternary structure, homodimer. Mg(2+) is required as a cofactor.

Autoinhibited and allosterically activated by 3,5-cyclic adenosine monophosphate (cAMP). An extensive conformational rearrangement relieves this autoinhibition by means of a substrate-mimicking lid that covers the protein-substrate binding surface. Functionally, catalyzes specifically the acetylation of the epsilon-amino group of a highly conserved lysine residue in acetyl-CoA synthetase (ACS). This acetylation results in the inactivation of ACS activity and could be important for mycobacteria to adjust to environmental changes. In Mycobacterium tuberculosis (strain ATCC 25618 / H37Rv), this protein is Acetyltransferase Pat.